Consider the following 145-residue polypeptide: Brain and acute leukemia cytoplasmic protein (145 aa).

Glycine 2 is lipidated: N-myristoyl glycine. Cysteine 3 is lipidated: S-palmitoyl cysteine. The tract at residues 3-35 (CGGSRADAIEPRYYESWTRETESTWLTYTDSDA) is interaction with CAMK2A. Positions 27-120 (WLTYTDSDAP…KRDAKRTSAK (94 aa)) are disordered. The segment covering 83 to 106 (CGTQCPNPQSLGSGPLTQKQNGLR) has biased composition (polar residues). Positions 108–119 (TEAKRDAKRTSA) are enriched in basic and acidic residues.

Interacts with CAMK2A. In terms of processing, palmitoylation and myristoylation target the protein to the lipid rafts. Expressed in the brain.

Its subcellular location is the cytoplasm. It localises to the synapse. It is found in the synaptosome. The protein localises to the membrane raft. The protein resides in the postsynaptic density. May play a synaptic role at the postsynaptic lipid rafts possibly through interaction with CAMK2A. In Sus scrofa (Pig), this protein is Brain and acute leukemia cytoplasmic protein (BAALC).